The primary structure comprises 391 residues: Chorismate synthase (391 aa).

NADP(+) is bound at residue arginine 48. Residues 126-128, glycine 286, 301-305, and arginine 328 contribute to the FMN site; these read RAS and KPTSS.

It belongs to the chorismate synthase family. FMNH2 is required as a cofactor.

It catalyses the reaction 5-O-(1-carboxyvinyl)-3-phosphoshikimate = chorismate + phosphate. It functions in the pathway metabolic intermediate biosynthesis; chorismate biosynthesis; chorismate from D-erythrose 4-phosphate and phosphoenolpyruvate: step 7/7. Its function is as follows. Catalyzes the anti-1,4-elimination of the C-3 phosphate and the C-6 proR hydrogen from 5-enolpyruvylshikimate-3-phosphate (EPSP) to yield chorismate, which is the branch point compound that serves as the starting substrate for the three terminal pathways of aromatic amino acid biosynthesis. This reaction introduces a second double bond into the aromatic ring system. The chain is Chorismate synthase from Saccharolobus islandicus (strain L.S.2.15 / Lassen #1) (Sulfolobus islandicus).